Consider the following 443-residue polypeptide: Probable glycine dehydrogenase (decarboxylating) subunit 1 (443 aa).

This sequence belongs to the GcvP family. N-terminal subunit subfamily. The glycine cleavage system is composed of four proteins: P, T, L and H. In this organism, the P 'protein' is a heterodimer of two subunits.

The enzyme catalyses N(6)-[(R)-lipoyl]-L-lysyl-[glycine-cleavage complex H protein] + glycine + H(+) = N(6)-[(R)-S(8)-aminomethyldihydrolipoyl]-L-lysyl-[glycine-cleavage complex H protein] + CO2. The glycine cleavage system catalyzes the degradation of glycine. The P protein binds the alpha-amino group of glycine through its pyridoxal phosphate cofactor; CO(2) is released and the remaining methylamine moiety is then transferred to the lipoamide cofactor of the H protein. This chain is Probable glycine dehydrogenase (decarboxylating) subunit 1, found in Koribacter versatilis (strain Ellin345).